Consider the following 469-residue polypeptide: Transcription factor SOX-10 (469 aa).

Disordered regions lie at residues 1 to 70, 163 to 203, 215 to 278, 357 to 378, and 436 to 469; these read MAEE…DDDK, LRMQ…QGGA, LDHR…DFGN, AQVKTETAGPQGPSHYSDQPST, and RPLYTAISDPSPSGPQSHSPTHWEQPVYTTLSRP. The segment covering 23–32 has biased composition (low complexity); it reads LSPGSAPSLG. The residue at position 24 (serine 24) is a Phosphoserine. Positions 33 to 44 are enriched in gly residues; sequence PDGGGGGGGGSG. The interval 65-105 is dimerization (DIM); sequence EADDDKFPVCIREAVSQVLSGYDWTLVPMPVRVNGASKSKP. The HMG box DNA-binding region spans 107 to 175; sequence VKRPMNAFMV…QHKKDHPDYK (69 aa). Basic and acidic residues-rich tracts occupy residues 163 to 176 and 257 to 274; these read LRMQHKKDHPDYKY and ADPKRDGRSMGEGGKPHI. The interval 231-313 is transactivation domain (TAM); the sequence is PEHPSGQSHG…LPPNGHPGHV (83 aa). Positions 356–469 are transactivation domain (TAC); that stretch reads KAQVKTETAG…QPVYTTLSRP (114 aa). Residues 443 to 469 are compositionally biased toward polar residues; that stretch reads SDPSPSGPQSHSPTHWEQPVYTTLSRP.

In terms of assembly, monomer. Interacts with ARMCX3 at the mitochondrial outer membrane surface. Interacts with PAX3.

It localises to the cytoplasm. It is found in the nucleus. The protein localises to the mitochondrion outer membrane. In terms of biological role, transcription factor that plays a central role in developing and mature glia. Specifically activates expression of myelin genes, during oligodendrocyte (OL) maturation, such as DUSP15 and MYRF, thereby playing a central role in oligodendrocyte maturation and CNS myelination. Once induced, MYRF cooperates with SOX10 to implement the myelination program. Transcriptional activator of MITF, acting synergistically with PAX3. Transcriptional activator of MBP, via binding to the gene promoter. This Sus scrofa (Pig) protein is Transcription factor SOX-10 (SOX10).